The following is a 257-amino-acid chain: NAD-capped RNA hydrolase NudC (257 aa).

Position 69 (Arg-69) interacts with substrate. Residues Cys-98 and Cys-101 each contribute to the Zn(2+) site. Glu-111 serves as a coordination point for substrate. Cys-116 and Cys-119 together coordinate Zn(2+). Tyr-124 provides a ligand contact to substrate. The 124-residue stretch at 125-248 folds into the Nudix hydrolase domain; the sequence is PQIAPCIIVA…TVARRLIEDT (124 aa). Residues Ala-158, Glu-174, and Glu-178 each contribute to the a divalent metal cation site. Residues 159–180 carry the Nudix box motif; that stretch reads GFVEVGETLEQAVAREVMEESG. Residue 192 to 199 coordinates substrate; it reads QPWPFPQS. A divalent metal cation is bound at residue Glu-219. Residue Ala-241 participates in substrate binding.

Belongs to the Nudix hydrolase family. NudC subfamily. As to quaternary structure, homodimer. Mg(2+) serves as cofactor. Mn(2+) is required as a cofactor. Requires Zn(2+) as cofactor.

The enzyme catalyses a 5'-end NAD(+)-phospho-ribonucleoside in mRNA + H2O = a 5'-end phospho-adenosine-phospho-ribonucleoside in mRNA + beta-nicotinamide D-ribonucleotide + 2 H(+). It carries out the reaction NAD(+) + H2O = beta-nicotinamide D-ribonucleotide + AMP + 2 H(+). It catalyses the reaction NADH + H2O = reduced beta-nicotinamide D-ribonucleotide + AMP + 2 H(+). MRNA decapping enzyme that specifically removes the nicotinamide adenine dinucleotide (NAD) cap from a subset of mRNAs by hydrolyzing the diphosphate linkage to produce nicotinamide mononucleotide (NMN) and 5' monophosphate mRNA. The NAD-cap is present at the 5'-end of some mRNAs and stabilizes RNA against 5'-processing. Has preference for mRNAs with a 5'-end purine. Catalyzes the hydrolysis of a broad range of dinucleotide pyrophosphates. This is NAD-capped RNA hydrolase NudC from Salmonella typhi.